Here is a 320-residue protein sequence, read N- to C-terminus: Lipoyl synthase (320 aa).

Basic and acidic residues predominate over residues methionine 1–arginine 29. The tract at residues methionine 1–serine 32 is disordered. Residues cysteine 60, cysteine 65, cysteine 71, cysteine 86, cysteine 90, cysteine 93, and serine 300 each contribute to the [4Fe-4S] cluster site. One can recognise a Radical SAM core domain in the interval cysteine 71–leucine 289.

This sequence belongs to the radical SAM superfamily. Lipoyl synthase family. Requires [4Fe-4S] cluster as cofactor.

Its subcellular location is the cytoplasm. It carries out the reaction [[Fe-S] cluster scaffold protein carrying a second [4Fe-4S](2+) cluster] + N(6)-octanoyl-L-lysyl-[protein] + 2 oxidized [2Fe-2S]-[ferredoxin] + 2 S-adenosyl-L-methionine + 4 H(+) = [[Fe-S] cluster scaffold protein] + N(6)-[(R)-dihydrolipoyl]-L-lysyl-[protein] + 4 Fe(3+) + 2 hydrogen sulfide + 2 5'-deoxyadenosine + 2 L-methionine + 2 reduced [2Fe-2S]-[ferredoxin]. The protein operates within protein modification; protein lipoylation via endogenous pathway; protein N(6)-(lipoyl)lysine from octanoyl-[acyl-carrier-protein]: step 2/2. Catalyzes the radical-mediated insertion of two sulfur atoms into the C-6 and C-8 positions of the octanoyl moiety bound to the lipoyl domains of lipoate-dependent enzymes, thereby converting the octanoylated domains into lipoylated derivatives. This chain is Lipoyl synthase, found in Cereibacter sphaeroides (strain ATCC 17025 / ATH 2.4.3) (Rhodobacter sphaeroides).